Consider the following 229-residue polypeptide: Potassium/proton antiporter CemA (229 aa).

3 helical membrane passes run 7–27, 107–127, and 189–209; these read FTPL…SFSV, ILHF…SILG, and IISG…KYWI.

The protein belongs to the CemA family.

It is found in the plastid. It localises to the chloroplast inner membrane. The enzyme catalyses K(+)(in) + H(+)(out) = K(+)(out) + H(+)(in). In terms of biological role, contributes to K(+)/H(+) antiport activity by supporting proton efflux to control proton extrusion and homeostasis in chloroplasts in a light-dependent manner to modulate photosynthesis. Prevents excessive induction of non-photochemical quenching (NPQ) under continuous-light conditions. Indirectly promotes efficient inorganic carbon uptake into chloroplasts. The polypeptide is Potassium/proton antiporter CemA (Nicotiana sylvestris (Wood tobacco)).